We begin with the raw amino-acid sequence, 542 residues long: Phosphoacetylglucosamine mutase 2 (542 aa).

The active-site Phosphoserine intermediate is Ser-77. Position 77 (Ser-77) interacts with Mg(2+). A phosphoserine mark is found at Ser-77 and Ser-82. Residues Asp-292, Asp-294, and Asp-296 each contribute to the Mg(2+) site. Substrate-binding positions include 385–387, 510–514, and Arg-519; these read EAN and RSSGT.

The protein belongs to the phosphohexose mutase family. Requires Mg(2+) as cofactor.

The protein localises to the cytoplasm. It is found in the nucleus. The enzyme catalyses N-acetyl-alpha-D-glucosamine 1-phosphate = N-acetyl-D-glucosamine 6-phosphate. It participates in nucleotide-sugar biosynthesis; UDP-N-acetyl-alpha-D-glucosamine biosynthesis; N-acetyl-alpha-D-glucosamine 1-phosphate from alpha-D-glucosamine 6-phosphate (route I): step 2/2. Its function is as follows. Catalyzes the conversion of GlcNAc-6-P into GlcNAc-1-P during the synthesis of uridine diphosphate/UDP-GlcNAc, which is a biosynthetic precursor of chitin and also supplies the amino sugars for N-linked oligosaccharides of glycoproteins. This is Phosphoacetylglucosamine mutase 2 from Schizosaccharomyces pombe (strain 972 / ATCC 24843) (Fission yeast).